We begin with the raw amino-acid sequence, 361 residues long: RLA class I histocompatibility antigen, alpha chain 19-1 (361 aa).

Positions 1 to 24 are cleaved as a signal peptide; sequence MGSIPPRTLLLLLAGALTLKDTQA. Residues 25-114 are alpha-1; that stretch reads GSHSMRYFYT…ALRYYNQSAA (90 aa). Topologically, residues 25–308 are extracellular; sequence GSHSMRYFYT…EPPAQPTALI (284 aa). The N-linked (GlcNAc...) asparagine glycan is linked to Asn-110. Residues 115–206 are alpha-2; sequence GSHTFQTMFG…EMGKETLQRA (92 aa). 2 disulfide bridges follow: Cys-125–Cys-188 and Cys-227–Cys-283. An alpha-3 region spans residues 207–298; the sequence is DPPKAHVTHH…GLPEPLTLTW (92 aa). An Ig-like C1-type domain is found at 209–297; sequence PKAHVTHHPA…EGLPEPLTLT (89 aa). The interval 299-308 is connecting peptide; the sequence is EPPAQPTALI. The helical transmembrane segment at 309–329 threads the bilayer; it reads VGIVAGVLGVLLILGAVVAVV. Residues 330–361 are Cytoplasmic-facing; the sequence is RRKKHSSDGKGGRYTPAAGGHRDQGSDDSLMP. The interval 335-361 is disordered; that stretch reads SSDGKGGRYTPAAGGHRDQGSDDSLMP. Phosphoserine is present on residues Ser-355 and Ser-358.

This sequence belongs to the MHC class I family. In terms of assembly, heterodimer of an alpha chain and a beta chain (beta-2-microglobulin).

The protein resides in the membrane. In terms of biological role, involved in the presentation of foreign antigens to the immune system. The protein is RLA class I histocompatibility antigen, alpha chain 19-1 of Oryctolagus cuniculus (Rabbit).